The sequence spans 97 residues: Aspartyl/glutamyl-tRNA(Asn/Gln) amidotransferase subunit C (97 aa).

This sequence belongs to the GatC family. As to quaternary structure, heterotrimer of A, B and C subunits.

The catalysed reaction is L-glutamyl-tRNA(Gln) + L-glutamine + ATP + H2O = L-glutaminyl-tRNA(Gln) + L-glutamate + ADP + phosphate + H(+). The enzyme catalyses L-aspartyl-tRNA(Asn) + L-glutamine + ATP + H2O = L-asparaginyl-tRNA(Asn) + L-glutamate + ADP + phosphate + 2 H(+). In terms of biological role, allows the formation of correctly charged Asn-tRNA(Asn) or Gln-tRNA(Gln) through the transamidation of misacylated Asp-tRNA(Asn) or Glu-tRNA(Gln) in organisms which lack either or both of asparaginyl-tRNA or glutaminyl-tRNA synthetases. The reaction takes place in the presence of glutamine and ATP through an activated phospho-Asp-tRNA(Asn) or phospho-Glu-tRNA(Gln). The polypeptide is Aspartyl/glutamyl-tRNA(Asn/Gln) amidotransferase subunit C (Clostridium botulinum (strain Eklund 17B / Type B)).